Reading from the N-terminus, the 414-residue chain is L-cysteine:1D-myo-inositol 2-amino-2-deoxy-alpha-D-glucopyranoside ligase (414 aa).

Positions 1 to 38 (MRSWPAPEVPNLPEAGLPGPALPLHLHDTATGTVRPTR) are disordered. The segment covering 11–38 (NLPEAGLPGPALPLHLHDTATGTVRPTR) has biased composition (low complexity). Position 48 (cysteine 48) interacts with Zn(2+). Residues 48–51 (CGIT), threonine 63, and 86–88 (NVT) contribute to the L-cysteinyl-5'-AMP site. The short motif at 50-60 (ITPYDATHLGH) is the 'HIGH' region element. The 'ERGGDP' region motif lies at 188-193 (ERGGDP). L-cysteinyl-5'-AMP is bound at residue tryptophan 228. Cysteine 232 provides a ligand contact to Zn(2+). An L-cysteinyl-5'-AMP-binding site is contributed by 250 to 252 (GSD). Histidine 257 lines the Zn(2+) pocket. Position 284 (valine 284) interacts with L-cysteinyl-5'-AMP. The short motif at 290 to 294 (KMSKS) is the 'KMSKS' region element.

Belongs to the class-I aminoacyl-tRNA synthetase family. MshC subfamily. Monomer. Zn(2+) serves as cofactor.

It catalyses the reaction 1D-myo-inositol 2-amino-2-deoxy-alpha-D-glucopyranoside + L-cysteine + ATP = 1D-myo-inositol 2-(L-cysteinylamino)-2-deoxy-alpha-D-glucopyranoside + AMP + diphosphate + H(+). In terms of biological role, catalyzes the ATP-dependent condensation of GlcN-Ins and L-cysteine to form L-Cys-GlcN-Ins. This Thermomonospora curvata (strain ATCC 19995 / DSM 43183 / JCM 3096 / KCTC 9072 / NBRC 15933 / NCIMB 10081 / Henssen B9) protein is L-cysteine:1D-myo-inositol 2-amino-2-deoxy-alpha-D-glucopyranoside ligase.